A 315-amino-acid polypeptide reads, in one-letter code: Acetaldehyde dehydrogenase 1 (315 aa).

12–15 (SGNI) contributes to the NAD(+) binding site. C132 serves as the catalytic Acyl-thioester intermediate. NAD(+) contacts are provided by residues 163 to 171 (SAGPGTRAN) and N291.

It belongs to the acetaldehyde dehydrogenase family.

The catalysed reaction is acetaldehyde + NAD(+) + CoA = acetyl-CoA + NADH + H(+). The sequence is that of Acetaldehyde dehydrogenase 1 from Paraburkholderia phymatum (strain DSM 17167 / CIP 108236 / LMG 21445 / STM815) (Burkholderia phymatum).